The chain runs to 466 residues: Ribulose bisphosphate carboxylase large chain (466 aa).

Position 5 is an N6,N6,N6-trimethyllysine (K5). The substrate site is built by N114 and T164. K166 acts as the Proton acceptor in catalysis. K168 contributes to the substrate binding site. Mg(2+) contacts are provided by K192, D194, and E195. K192 carries the post-translational modification N6-carboxylysine. The active-site Proton acceptor is H285. Positions 286, 318, and 370 each coordinate substrate.

The protein belongs to the RuBisCO large chain family. Type I subfamily. Heterohexadecamer of 8 large chains and 8 small chains; disulfide-linked. The disulfide link is formed within the large subunit homodimers. Mg(2+) is required as a cofactor. Post-translationally, the disulfide bond which can form in the large chain dimeric partners within the hexadecamer appears to be associated with oxidative stress and protein turnover.

It is found in the plastid. It localises to the chloroplast. It carries out the reaction 2 (2R)-3-phosphoglycerate + 2 H(+) = D-ribulose 1,5-bisphosphate + CO2 + H2O. It catalyses the reaction D-ribulose 1,5-bisphosphate + O2 = 2-phosphoglycolate + (2R)-3-phosphoglycerate + 2 H(+). In terms of biological role, ruBisCO catalyzes two reactions: the carboxylation of D-ribulose 1,5-bisphosphate, the primary event in carbon dioxide fixation, as well as the oxidative fragmentation of the pentose substrate in the photorespiration process. Both reactions occur simultaneously and in competition at the same active site. This chain is Ribulose bisphosphate carboxylase large chain, found in Saururus cernuus (Lizard's tail).